The primary structure comprises 223 residues: Twisted gastrulation protein homolog 1 (223 aa).

The N-terminal stretch at 1–25 (MKLHYVAVLTLAILMFLTWLPASLS) is a signal peptide. Residues asparagine 52 and asparagine 81 are each glycosylated (N-linked (GlcNAc...) asparagine).

Belongs to the twisted gastrulation protein family. As to quaternary structure, interacts with CHRD and BMP4. This interaction enhances CHRD/BMP4 complex formation. Interacts with BMP7.

It localises to the secreted. May be involved in dorsoventral axis formation. Seems to antagonize BMP signaling by forming ternary complexes with CHRD and BMPs, thereby preventing BMPs from binding to their receptors. In addition to the anti-BMP function, also has pro-BMP activity, partly mediated by cleavage and degradation of CHRD, which releases BMPs from ternary complexes. May be an important modulator of BMP-regulated cartilage development and chondrocyte differentiation. May play a role in thymocyte development. This Pongo abelii (Sumatran orangutan) protein is Twisted gastrulation protein homolog 1 (TWSG1).